The chain runs to 160 residues: Endoribonuclease YbeY (160 aa).

His-125, His-129, and His-135 together coordinate Zn(2+).

It belongs to the endoribonuclease YbeY family. Zn(2+) is required as a cofactor.

It localises to the cytoplasm. Its function is as follows. Single strand-specific metallo-endoribonuclease involved in late-stage 70S ribosome quality control and in maturation of the 3' terminus of the 16S rRNA. The polypeptide is Endoribonuclease YbeY (Leuconostoc citreum (strain KM20)).